The sequence spans 320 residues: Cytochrome f (320 aa).

The N-terminal stretch at 1–35 (MQTRNAFSWLKKQITRSISVSLMIYILTRTSISSA) is a signal peptide. Heme-binding residues include Y36, C56, C59, and H60. A helical transmembrane segment spans residues 286-306 (AQGLLFFLASVILAQIFLVLK).

It belongs to the cytochrome f family. As to quaternary structure, the 4 large subunits of the cytochrome b6-f complex are cytochrome b6, subunit IV (17 kDa polypeptide, petD), cytochrome f and the Rieske protein, while the 4 small subunits are PetG, PetL, PetM and PetN. The complex functions as a dimer. Requires heme as cofactor.

The protein localises to the plastid. The protein resides in the chloroplast thylakoid membrane. Functionally, component of the cytochrome b6-f complex, which mediates electron transfer between photosystem II (PSII) and photosystem I (PSI), cyclic electron flow around PSI, and state transitions. The chain is Cytochrome f from Nicotiana tomentosiformis (Tobacco).